We begin with the raw amino-acid sequence, 699 residues long: MARETSINKYRNLGIMAHIDAGKTTTTERILFYTGVSHKLGEVHEGAATMDWMEQEQERGITITSAATTCFWQGMAGQFDKHRINIIDTPGHVDFTIEVERSLRVLDGACLVLCSVGGVQPQTETVWRQANKYKVPRIAYVNKMDRTGANFLRVVKQMHDRLKANAVPLQLPVGAEDTFKGVVDLIKMKEIIWDEETNGLKFEYGDIPEEMRAQAEEYREKLVEAAAESSEELMDKYLESGTLSEEEIIAGLRQRTIANEIIPVLCGSSFKNKGVQAMLDKVIELLPSPVDVPAIQGVNPNTNETEKRESTDDAPFSALAFKIATDPFVGTLTFVRCYSGVLEAGTTVLNSVKDKKERIGRIVQMHSNSRVEIKEVHAGDIAACIGLKEVVTGETLCDVNAPIILERMEFPEPVIAVAVEPKTKADQEKMGLALAKLAQEDPSFRVHTDEETGQTIISGMGELHLEIIVDRMKREFKVEANVGAPQVAYRETIRESVEQEGKFVRQSGGRGQFGHVWLRIEPQEPGFGYEFVNQIVGGVVPKEYIPAVDKGVQEQMQNGVLAGYPVVDIKVTLYDGSYHEVDSSEMAFKLAAAEGFKLGARKAKPVLLEPMMKVEVSTPEEYMGDVIGDLNSRRGLIQGMDDELTGKVIHAQVPLANMFGYATSLRSLTQGRANYSMEFDCYNEAPNNVVEEVIKSKSK.

In terms of domain architecture, tr-type G spans 8–290; that stretch reads NKYRNLGIMA…KVIELLPSPV (283 aa). GTP contacts are provided by residues 17 to 24, 88 to 92, and 142 to 145; these read AHIDAGKT, DTPGH, and NKMD.

This sequence belongs to the TRAFAC class translation factor GTPase superfamily. Classic translation factor GTPase family. EF-G/EF-2 subfamily.

The protein resides in the cytoplasm. Functionally, catalyzes the GTP-dependent ribosomal translocation step during translation elongation. During this step, the ribosome changes from the pre-translocational (PRE) to the post-translocational (POST) state as the newly formed A-site-bound peptidyl-tRNA and P-site-bound deacylated tRNA move to the P and E sites, respectively. Catalyzes the coordinated movement of the two tRNA molecules, the mRNA and conformational changes in the ribosome. This is Elongation factor G from Dichelobacter nodosus (strain VCS1703A).